A 327-amino-acid polypeptide reads, in one-letter code: Petrobactin synthase (327 aa).

It carries out the reaction N(8)-citryl-spermidine + 3,4-dihydroxybenzoyl-[aryl-carrier protein] = N(1)-(3,4-dihydroxybenzoyl)-N(8)-citryl-spermidine + holo-[aryl-carrier protein] + H(+). The enzyme catalyses N(8),N'(8)-citryl-bis(spermidine) + 3,4-dihydroxybenzoyl-[aryl-carrier protein] = N(1)-(3,4-dihydroxybenzoyl)-N(8),N'(8)-citryl-bis(spermidine) + holo-[aryl-carrier protein] + H(+). It catalyses the reaction N(1)-(3,4-dihydroxybenzoyl)-N(8),N'(8)-citryl-bis(spermidine) + 3,4-dihydroxybenzoyl-[aryl-carrier protein] = petrobactin + holo-[aryl-carrier protein] + H(+). It functions in the pathway siderophore biosynthesis; petrobactin biosynthesis. Involved in the biosynthesis of petrobactin, a catecholate siderophore that functions in both iron acquisition and virulence. Transfers the activated 3,4-dihydroxybenzoate (3,4-DHBA) moiety from 3,4-DHBA-loaded AsbD to different receipient molecules, including N-citryl-spermidine, N8,N'8-citryl-bis(spermidine) and N1-(3,4-dihydroxybenzoyl)-N8,N'8-citryl-bis(spermidine). Also catalyzes the transfer of the activated 3,4-DHBA moiety from 3,4-DHBA-loaded AsbD to spermidine to generate DHB-spermidine (DHB-SP). This Bacillus anthracis protein is Petrobactin synthase.